The sequence spans 846 residues: Matrin-3 (846 aa).

Ser-2 carries the post-translational modification N-acetylserine. Residue Lys-3 is modified to N6-acetyllysine; alternate. Lys-3 participates in a covalent cross-link: Glycyl lysine isopeptide (Lys-Gly) (interchain with G-Cter in SUMO2); alternate. Residues Ser-4, Ser-9, Ser-14, Ser-22, Ser-41, Ser-118, and Ser-126 each carry the phosphoserine modification. Residues Lys-132 and Lys-146 each participate in a glycyl lysine isopeptide (Lys-Gly) (interchain with G-Cter in SUMO2) cross-link. Disordered regions lie at residues 147–174 (RRRT…YRVP) and 187–213 (DSFD…ESGY). Residue Thr-150 is modified to Phosphothreonine. Ser-157 carries the post-translational modification Phosphoserine. Tyr-158 bears the Phosphotyrosine mark. Over residues 160 to 174 (RDGRSATREPPYRVP) the composition is skewed to basic and acidic residues. 3 positions are modified to phosphoserine: Ser-164, Ser-188, and Ser-195. A compositionally biased stretch (basic and acidic residues) spans 201–213 (DYDHGSRSQESGY). Tyr-202 carries the post-translational modification Phosphotyrosine. Phosphoserine is present on residues Ser-206, Ser-208, and Ser-211. Tyr-219 bears the Phosphotyrosine mark. The residue at position 234 (Ser-234) is a Phosphoserine. Residue Lys-245 forms a Glycyl lysine isopeptide (Lys-Gly) (interchain with G-Cter in SUMO2) linkage. Residue Ser-264 is modified to Phosphoserine. A Glycyl lysine isopeptide (Lys-Gly) (interchain with G-Cter in SUMO2) cross-link involves residue Lys-269. The residue at position 275 (Ser-275) is a Phosphoserine. Residues 342 to 394 (PFMLQQSTNPAPGILGPPPPSFHLGGPAVGPRGNLGAGNGNLQGPRHMQKGRV) form a disordered region. Residues 398 to 473 (RVVHIMDFQR…KPVRVHLSQK (76 aa)) form the RRM 1 domain. Glycyl lysine isopeptide (Lys-Gly) (interchain with G-Cter in SUMO2) cross-links involve residues Lys-478, Lys-487, and Lys-491. Positions 496–571 (RVIHLSNLPH…RCVKVDLSEK (76 aa)) constitute an RRM 2 domain. Phosphoserine occurs at positions 509 and 511. A Glycyl lysine isopeptide (Lys-Gly) (interchain with G-Cter in SUMO2) cross-link involves residue Lys-515. At Lys-522 the chain carries N6-acetyllysine; alternate. Lys-522 participates in a covalent cross-link: Glycyl lysine isopeptide (Lys-Gly) (interchain with G-Cter in SUMO2); alternate. Ser-533 is subject to Phosphoserine. Glycyl lysine isopeptide (Lys-Gly) (interchain with G-Cter in SUMO2) cross-links involve residues Lys-554 and Lys-555. Residue Lys-571 is modified to N6-acetyllysine. Residues 588–779 (KKDKSRKRSY…EDYTIPDEYR (192 aa)) are disordered. Phosphoserine is present on residues Ser-596, Ser-598, Ser-604, and Ser-606. Basic and acidic residues predominate over residues 600–642 (DGKESPSDKKSKTDAQKTESPAEGKEQEEKSGEDGEKDTKDDQ). Glycyl lysine isopeptide (Lys-Gly) (interchain with G-Cter in SUMO2) cross-links involve residues Lys-616 and Lys-629. Acidic residues predominate over residues 652 to 664 (ESEDELLVDEEEA). Phosphoserine occurs at positions 653, 670, 672, and 673. Residues 665-675 (AALLESGSSVG) are compositionally biased toward low complexity. The residue at position 678 (Thr-678) is a Phosphothreonine. Ser-688 carries the phosphoserine modification. Over residues 688 to 703 (SDGKKEPSDKAVKKDP) the composition is skewed to basic and acidic residues. Residues 709–717 (SKKKLKKVD) carry the Nuclear localization signal motif. Residues Lys-718 and Lys-735 each participate in a glycyl lysine isopeptide (Lys-Gly) (interchain with G-Cter in SUMO2) cross-link. Phosphothreonine is present on Thr-740. Phosphoserine is present on residues Ser-746 and Ser-758. The segment covering 766–779 (DENKEDYTIPDEYR) has biased composition (basic and acidic residues). A Glycyl lysine isopeptide (Lys-Gly) (interchain with G-Cter in SUMO2) cross-link involves residue Lys-769. The segment at 800–831 (FYCKLCSLFYTNEEVAKNTHCSSLPHYQKLKK) adopts a Matrin-type zinc-finger fold. Residue Lys-835 is modified to N6-acetyllysine; alternate. A Glycyl lysine isopeptide (Lys-Gly) (interchain with G-Cter in SUMO2); alternate cross-link involves residue Lys-835.

As to quaternary structure, part of a complex consisting of SFPQ, NONO and MATR3. Interacts with AGO1 and AGO2. Part of a complex composed at least of ASH2L, EMSY, HCFC1, HSPA8, CCAR2, MATR3, MKI67, RBBP5, TUBB2A, WDR5 and ZNF335; this complex may have a histone H3-specific methyltransferase activity. Interacts with TARDBP. Part of the HDP-RNP complex composed of at least HEXIM1, PRKDC, XRCC5, XRCC6, paraspeckle proteins (SFPQ, NONO, PSPC1, RBM14, and MATR3) and NEAT1 RNA. Interacts with FUS. Interacts with IGF2BP1. Interacts with IGF2BP2 and IGF2BP3. Interacts with RBPMS.

Its subcellular location is the nucleus matrix. Its function is as follows. May play a role in transcription or may interact with other nuclear matrix proteins to form the internal fibrogranular network. In association with the SFPQ-NONO heteromer may play a role in nuclear retention of defective RNAs. Plays a role in the regulation of DNA virus-mediated innate immune response by assembling into the HDP-RNP complex, a complex that serves as a platform for IRF3 phosphorylation and subsequent innate immune response activation through the cGAS-STING pathway. Binds to N6-methyladenosine (m6A)-containing mRNAs and contributes to MYC stability by binding to m6A-containing MYC mRNAs. May bind to specific miRNA hairpins. The sequence is that of Matrin-3 (Matr3) from Mus musculus (Mouse).